The following is a 223-amino-acid chain: MNAKELIARRIAMELHDGDIVNLGIGLPTQVVNYLPDNVNITLQSENGFLGLTAFDPENANSNLVNAGGQPCGIKKGGSTFDSAFSFALIRGGHVDACVLGGLEVDQEANLANWMVPGKMVPGMGGAMDLVTGAKKVIIGMEHCAKSGSSKILKKCTLPLTASKKVAMVVTELAVFNFIEGRLVLKEHAPHVDLETIKAKTEADFIVADDFKEMQISQKGLEL.

The active site involves Glu46.

Belongs to the 3-oxoacid CoA-transferase subunit B family. Heterotetramer composed of two alpha subunits (AtoD) and two beta subunits (AtoA).

The enzyme catalyses an acyl-CoA + acetate = a carboxylate + acetyl-CoA. It catalyses the reaction acetoacetate + acetyl-CoA = acetoacetyl-CoA + acetate. It functions in the pathway lipid metabolism; short-chain fatty acid metabolism. Its function is as follows. Coenzyme A transferase which is involved in short-chain fatty acid degradation and catalyzes the activation of short-chain fatty acids to their respective CoA thiolesters. This is Acetate CoA-transferase subunit beta (atoA) from Haemophilus influenzae (strain ATCC 51907 / DSM 11121 / KW20 / Rd).